Reading from the N-terminus, the 122-residue chain is Large ribosomal subunit protein uL14 (122 aa).

It belongs to the universal ribosomal protein uL14 family. In terms of assembly, part of the 50S ribosomal subunit. Forms a cluster with proteins L3 and L19. In the 70S ribosome, L14 and L19 interact and together make contacts with the 16S rRNA in bridges B5 and B8.

Functionally, binds to 23S rRNA. Forms part of two intersubunit bridges in the 70S ribosome. The polypeptide is Large ribosomal subunit protein uL14 (Caldicellulosiruptor saccharolyticus (strain ATCC 43494 / DSM 8903 / Tp8T 6331)).